The chain runs to 629 residues: Polyadenylate-binding protein, cytoplasmic and nuclear (629 aa).

The segment at 1–47 (MTLENKAEASPATKEETTTEAAPAEGEAKTESSEEKGSKEDQGDNAS) is disordered. Positions 26-42 (GEAKTESSEEKGSKEDQ) are enriched in basic and acidic residues. 4 consecutive RRM domains span residues 46 to 124 (ASLY…WSQR), 134 to 211 (GNIY…PHVP), 227 to 304 (TNVF…RAKK), and 330 to 407 (VNLY…LAQR). The tract at residues 465–543 (GANPQMMMRP…RRKDGESRVA (79 aa)) is disordered. Composition is skewed to low complexity over residues 493–506 (MYGA…QGGF) and 514–531 (GGQP…QFRG). Residues 542–624 (VADSISNALE…AITAYNEYLN (83 aa)) enclose the PABC domain.

This sequence belongs to the polyadenylate-binding protein type-1 family.

The protein resides in the cytoplasm. The protein localises to the nucleus. In terms of biological role, binds the poly(A) tail of mRNA. Appears to be an important mediator of the multiple roles of the poly(A) tail in mRNA biogenesis, stability and translation. In the nucleus, involved in both mRNA cleavage and polyadenylation. Is also required for efficient mRNA export to the cytoplasm. Acts in concert with a poly(A)-specific nuclease (PAN) to affect poly(A) tail shortening, which may occur concomitantly with either nucleocytoplasmic mRNA transport or translational initiation. In the cytoplasm, stimulates translation initiation and regulates mRNA decay through translation termination-coupled poly(A) shortening, probably mediated by PAN. This is Polyadenylate-binding protein, cytoplasmic and nuclear (PAB1) from Yarrowia lipolytica (strain CLIB 122 / E 150) (Yeast).